The following is a 285-amino-acid chain: NAD kinase (285 aa).

D68 functions as the Proton acceptor in the catalytic mechanism. NAD(+) is bound by residues 68 to 69 (DG), 142 to 143 (ND), R153, R170, D172, and Q242.

It belongs to the NAD kinase family. A divalent metal cation serves as cofactor.

It localises to the cytoplasm. It carries out the reaction NAD(+) + ATP = ADP + NADP(+) + H(+). Its function is as follows. Involved in the regulation of the intracellular balance of NAD and NADP, and is a key enzyme in the biosynthesis of NADP. Catalyzes specifically the phosphorylation on 2'-hydroxyl of the adenosine moiety of NAD to yield NADP. The polypeptide is NAD kinase (Acidobacterium capsulatum (strain ATCC 51196 / DSM 11244 / BCRC 80197 / JCM 7670 / NBRC 15755 / NCIMB 13165 / 161)).